A 205-amino-acid chain; its full sequence is Probable thymidylate kinase (205 aa).

Residue 7-14 participates in ATP binding; sequence GIDGSGKS.

Belongs to the thymidylate kinase family.

The catalysed reaction is dTMP + ATP = dTDP + ADP. This Methanoculleus marisnigri (strain ATCC 35101 / DSM 1498 / JR1) protein is Probable thymidylate kinase.